A 389-amino-acid chain; its full sequence is Succinate--CoA ligase [ADP-forming] subunit beta (389 aa).

One can recognise an ATP-grasp domain in the interval 9-244 (KAVLAKYGVP…LTEEDPAEVE (236 aa)). Residues Lys-46, 53-55 (GRG), Glu-99, Ser-102, and Glu-107 contribute to the ATP site. 2 residues coordinate Mg(2+): Asn-199 and Asp-213. Substrate is bound by residues Asn-264 and 321–323 (GIM).

It belongs to the succinate/malate CoA ligase beta subunit family. Heterotetramer of two alpha and two beta subunits. The cofactor is Mg(2+).

The enzyme catalyses succinate + ATP + CoA = succinyl-CoA + ADP + phosphate. The catalysed reaction is GTP + succinate + CoA = succinyl-CoA + GDP + phosphate. Its pathway is carbohydrate metabolism; tricarboxylic acid cycle; succinate from succinyl-CoA (ligase route): step 1/1. Its function is as follows. Succinyl-CoA synthetase functions in the citric acid cycle (TCA), coupling the hydrolysis of succinyl-CoA to the synthesis of either ATP or GTP and thus represents the only step of substrate-level phosphorylation in the TCA. The beta subunit provides nucleotide specificity of the enzyme and binds the substrate succinate, while the binding sites for coenzyme A and phosphate are found in the alpha subunit. The polypeptide is Succinate--CoA ligase [ADP-forming] subunit beta (Parvibaculum lavamentivorans (strain DS-1 / DSM 13023 / NCIMB 13966)).